Here is a 676-residue protein sequence, read N- to C-terminus: RNA helicase NPH-II (676 aa).

Positions 172–347 (FSAWISHRPV…VFLPNPAFIH (176 aa)) constitute a Helicase ATP-binding domain. Residue 185–192 (GGTGVGKT) participates in ATP binding. Positions 296–299 (DEVH) match the DEXH box motif. A Helicase C-terminal domain is found at 366 to 542 (NPSSRMAYIE…KFNLTLPEDL (177 aa)).

The protein belongs to the DEAD box helicase family. DEAH subfamily. In terms of assembly, monomer.

The protein localises to the virion. It carries out the reaction ATP + H2O = ADP + phosphate + H(+). Functionally, NTP-dependent helicase that catalyzes unidirectional unwinding of 3'tailed duplex RNAs and plays an important role during transcription of early mRNAs, presumably by preventing R-loop formation behind the elongating RNA polymerase. Might also play a role in the export of newly synthesized mRNA chains out of the core into the cytoplasm. Required for replication and propagation of viral particles. The sequence is that of RNA helicase NPH-II (OPG084) from Homo sapiens (Human).